A 184-amino-acid polypeptide reads, in one-letter code: Signal peptidase complex catalytic subunit SEC11 (184 aa).

Topologically, residues 1–28 (MDFIKEQYNSLVLDLRKTFRNKRDGLSH) are cytoplasmic. A helical; Signal-anchor for type II membrane protein membrane pass occupies residues 29 to 49 (ILNVICLLLNALMIWKLLVVF). The Lumenal portion of the chain corresponds to 50 to 184 (TGCESPVVVV…MLIMILMGYE (135 aa)). Active-site charge relay system residues include Ser-63, His-101, and Asp-127. The C-terminal short (CTS) helix stretch occupies residues 170–181 (AIVSIMLIMILM).

Belongs to the peptidase S26B family. As to quaternary structure, component of the signal peptidase complex (SPC) composed of a catalytic subunit SEC11/SPC21 and three accessory subunits SPC25, SPC3/SPC22, SPC1/SPC12. Within the complex, interacts with SPC25. The complex induces a local thinning of the ER membrane which is used to measure the length of the signal peptide (SP) h-region of protein substrates. This ensures the selectivity of the complex towards h-regions shorter than 18-20 amino acids. The complex interacts with the SEC61 channel-forming translocon complex and is involved in the import of classical signal sequence-containing proteins. Post-translationally, phosphorylated. Phosphorylation increases catalytic activity.

The protein resides in the endoplasmic reticulum membrane. It catalyses the reaction Cleavage of hydrophobic, N-terminal signal or leader sequences from secreted and periplasmic proteins.. With respect to regulation, phosphorylation increases catalytic activity. Ca(2+) slightly increases catalytic activity in vitro. Functionally, catalytic component of the signal peptidase complex (SPC) which catalyzes the cleavage of N-terminal signal sequences from nascent proteins as they are translocated into the lumen of the endoplasmic reticulum. Specifically cleaves N-terminal signal peptides that contain a hydrophobic alpha-helix (h-region) shorter than 18-20 amino acids. This is Signal peptidase complex catalytic subunit SEC11 from Plasmodium falciparum (isolate 3D7).